The following is a 256-amino-acid chain: MAVGKNKRLSKGKKGLKKRTVDPFSRKDEYSVKAPSTFQIRDVGKTLVNRTTGLKNANDSLKGRIFEVSLADLQNDEDHAFRKVKLRVDEVQGKNCLTNFHGLDFTSDKLRSLVRKWQSLIEANVTVKTTDDYLLRLFAIAFTKRRPNQIKKTTYARSSQIRAIRKKMTEIIQREAASCTLSQLTTKLIPEVIGREIEKSTQGIYPLQNVHIRKVKLLKSPKFDLGALLNLHGESTTDDQGHKVEREFKETVLESV.

Residues 1 to 18 (MAVGKNKRLSKGKKGLKK) are compositionally biased toward basic residues. Residues 1-20 (MAVGKNKRLSKGKKGLKKRT) are disordered. Ala-2 is modified (N-acetylalanine; partial).

This sequence belongs to the eukaryotic ribosomal protein eS1 family. In terms of assembly, component of the small ribosomal subunit. Mature ribosomes consist of a small (40S) and a large (60S) subunit. The 40S subunit contains about 33 different proteins and 1 molecule of RNA (18S). The 60S subunit contains about 49 different proteins and 3 molecules of RNA (25S, 5.8S and 5S).

The protein localises to the cytoplasm. The chain is Small ribosomal subunit protein eS1 (rps1) from Talaromyces stipitatus (strain ATCC 10500 / CBS 375.48 / QM 6759 / NRRL 1006) (Penicillium stipitatum).